A 155-amino-acid chain; its full sequence is Cardio acceleratory peptide 2b (155 aa).

An N-terminal signal peptide occupies residues 1–26 (MKAIFSLYNIVSAILLLVLLAEFSTA). Positions 27–33 (ELNHDKN) are excised as a propeptide. Val47 is modified (valine amide). Positions 50 to 85 (SDPSLANSLRDASDAAVFDGLYGDASQEDYNEADYQ) are excised as a propeptide. Val96 bears the Valine amide mark. Positions 99-117 (SDAELRKFAHLLALQQVLD) are excised as a propeptide. Position 134 is a leucine amide (Leu134). Residues 138 to 155 (SVDAKAFSDASKGQQEFN) constitute a propeptide that is removed on maturation.

This sequence belongs to the pyrokinin family.

Its subcellular location is the secreted. Functionally, CAP-1 and CAP-2, but not CAP-3 are ligands for the Capa receptor. CAP-1 and CAP-2 are probably components of the signal transduction pathway that leads to Malpighian tubule fluid secretion via the second messenger nitric oxide. The sequence is that of Cardio acceleratory peptide 2b from Drosophila pseudoobscura pseudoobscura (Fruit fly).